We begin with the raw amino-acid sequence, 477 residues long: MKNVKKRVGVVLLILAVLGVYMLAMPANTVSAAGVPFNTKYPYGPTSIADNQSEVTAMLKAEWEDWKSKRITSNGAGGYKRVQRDASTNYDTVSEGMGYGLLLAVCFNEQALFDDLYRYVKSHFNGNGLMHWHIDANNNVTSHDGGDGAATDADEDIALALIFADKLWGSSGAINYGQEARTLINNLYNHCVEHGSYVLKPGDRWGGSSVTNPSYFAPAWYKVYAQYTGDTRWNQVADKCYQIVEEVKKYNNGTGLVPDWCTASGTPASGQSYDYKYDATRYGWRTAVDYSWFGDQRAKANCDMLTKFFARDGAKGIVDGYTIQGSKISNNHNASFIGPVAAASMTGYDLNFAKELYRETVAVKDSEYYGYYGNSLRLLTLLYITGNFPNPLSDLSGQPTPPSNPTPSLPPQVVYGDVNGDGNVNSTDLTMLKRYLLKSVTNINREAADVNRDGAINSSDMTILKRYLIKSIPHLPY.

Residues 1–32 (MKNVKKRVGVVLLILAVLGVYMLAMPANTVSA) form the signal peptide. Glu-95 serves as the catalytic Proton donor. Asp-152 acts as the Nucleophile in catalysis. The region spanning 411-477 (PQVVYGDVNG…LIKSIPHLPY (67 aa)) is the Dockerin domain.

Belongs to the glycosyl hydrolase 8 (cellulase D) family.

It catalyses the reaction Endohydrolysis of (1-&gt;4)-beta-D-glucosidic linkages in cellulose, lichenin and cereal beta-D-glucans.. Its function is as follows. This enzyme catalyzes the endohydrolysis of 1,4-beta-glucosidic linkages in cellulose, lichenin and cereal beta-D-glucans. The chain is Endoglucanase A (celA) from Acetivibrio thermocellus (strain ATCC 27405 / DSM 1237 / JCM 9322 / NBRC 103400 / NCIMB 10682 / NRRL B-4536 / VPI 7372) (Clostridium thermocellum).